Consider the following 629-residue polypeptide: MSAEVRLRRLQQLVLDPGFLGLEPLLDLLLGVHQELGASELAQDKYVADFLQWAEPIVVRLKEVRLQRDDFEILKVIGRGAFSEVAVVKMKQTGQVYAMKIMNKWDMLKRGEVSCFREERDVLVNGDRRWITQLHFAFQDENYLYLVMEYYVGGDLLTLLSKFGERIPAEMARFYLAEIVMAIDSVHRLGYVHRDIKPDNILLDRCGHIRLADFGSCLKLRADGTVRSLVAVGTPDYLSPEILQAVGGGPGTGSYGPECDWWALGVFAYEMFYGQTPFYADSTAETYGKIVHYKEHLSLPLVDEGVPEEARDFIQRLLCPPETRLGRGGAGDFRTHPFFFGLDWDGLRDSVPPFTPDFEGATDTCNFDLVEDGLTAMVSGGGETLSDIREGAPLGVHLPFVGYSYSCMALRDSEVPGPTPMELEAEQLLEPHVQAPSLEPSVSPQDETAEVAVPAAVPAAEAEAEVTLRELQEALEEEVLTRQSLSREMEAIRTDNQNFASQLREAEARNRDLEAHVRQLQERMELLQAEGATAVTGVPSPRATDPPSHLDGPPAVAVGQCPLVGPGPMHRRHLLLPARVPRPGLSEALSLLLFAVVLSRAAALGCIGLVAHAGQLTAVWRRPGAARAP.

The Cytoplasmic portion of the chain corresponds to Met1 to Ser590. The region spanning Phe71–Phe339 is the Protein kinase domain. Residues Ile77–Val85 and Lys100 each bind ATP. Asp195 serves as the catalytic Proton acceptor. Ser216 and Ser228 each carry phosphoserine; by autocatalysis. Thr234 carries the post-translational modification Phosphothreonine; by autocatalysis. The region spanning Phe340 to Val415 is the AGC-kinase C-terminal domain. Positions Val457–Thr536 form a coiled coil. Residues Leu591–Ala611 traverse the membrane as a helical; Anchor for type IV membrane protein segment. Residues His612–Pro629 are Lumenal-facing.

Belongs to the protein kinase superfamily. AGC Ser/Thr protein kinase family. DMPK subfamily. Homodimer; homodimerization stimulates the kinase activity. Interacts with HSPB2; may enhance DMPK kinase activity. Interacts with PLN; phosphorylates PLN. May interact with RAC1; may regulate DMPK kinase activity. Interacts with LMNA; may regulate nuclear envelope stability. Requires Mg(2+) as cofactor. In terms of processing, phosphorylated. Autophosphorylates. Phosphorylation by RAF1 may result in activation of DMPK. Proteolytic processing of the C-terminus may remove the transmembrane domain and release the kinase from membranes stimulating its activity. In terms of tissue distribution, most isoforms are expressed in many tissues including heart, skeletal muscle, liver and brain, except for isoform 2 which is only found in the heart and skeletal muscle, and isoform 14 which is only found in the brain, with high levels in the striatum, cerebellar cortex and pons.

The protein resides in the endoplasmic reticulum membrane. The protein localises to the nucleus outer membrane. It is found in the mitochondrion outer membrane. Its subcellular location is the sarcoplasmic reticulum membrane. It localises to the cell membrane. The protein resides in the cytoplasm. The protein localises to the cytosol. It is found in the mitochondrion membrane. It carries out the reaction L-seryl-[protein] + ATP = O-phospho-L-seryl-[protein] + ADP + H(+). It catalyses the reaction L-threonyl-[protein] + ATP = O-phospho-L-threonyl-[protein] + ADP + H(+). With respect to regulation, coiled-coil-mediated oligomerization enhances the catalytic activity. Proteolytic processing of the C-terminus may release the protein from membranes and constitute a mean to regulate the enzyme. May be regulated by HSPB2, RAC1, RAF1 and G-protein second messengers. Non-receptor serine/threonine protein kinase which is necessary for the maintenance of skeletal muscle structure and function. May play a role in myocyte differentiation and survival by regulating the integrity of the nuclear envelope and the expression of muscle-specific genes. May also phosphorylate PPP1R12A and inhibit the myosin phosphatase activity to regulate myosin phosphorylation. Also critical to the modulation of cardiac contractility and to the maintenance of proper cardiac conduction activity probably through the regulation of cellular calcium homeostasis. Phosphorylates PLN, a regulator of calcium pumps and may regulate sarcoplasmic reticulum calcium uptake in myocytes. May also phosphorylate FXYD1/PLM which is able to induce chloride currents. May also play a role in synaptic plasticity. This is Myotonin-protein kinase (DMPK) from Homo sapiens (Human).